The following is a 621-amino-acid chain: Glucose 1,6-bisphosphate synthase (621 aa).

Residues Arg73 and Ser175 each contribute to the alpha-D-glucose 1,6-bisphosphate site. The active-site Phosphoserine intermediate is Ser175. 4 residues coordinate Mg(2+): Ser175, Asp332, Asp334, and Asp336. Ser175 carries the post-translational modification Phosphoserine. Positions 336, 337, 433, 435, and 447 each coordinate alpha-D-glucose 1,6-bisphosphate.

This sequence belongs to the phosphohexose mutase family. Expressed at highest levels in the brain and testis, at intermediate levels in thymus, spleen, lung and skeletal muscle, and at lowest levels in kidney, liver and heart.

It is found in the cytoplasm. It localises to the cytosol. The enzyme catalyses (2R)-3-phospho-glyceroyl phosphate + alpha-D-glucose 1-phosphate = alpha-D-glucose 1,6-bisphosphate + (2R)-3-phosphoglycerate + H(+). It carries out the reaction alpha-D-glucose 6-phosphate + (2R)-3-phospho-glyceroyl phosphate = alpha-D-glucose 1,6-bisphosphate + (2R)-3-phosphoglycerate + H(+). The catalysed reaction is (2R)-3-phospho-glyceroyl phosphate + alpha-D-ribose 1-phosphate = alpha-D-ribose 1,5-bisphosphate + (2R)-3-phosphoglycerate + H(+). It catalyses the reaction 2-deoxy-alpha-D-ribose 1-phosphate + (2R)-3-phospho-glyceroyl phosphate = 2-deoxy-alpha-D-ribose 1,5-bisphosphate + (2R)-3-phosphoglycerate + H(+). The enzyme catalyses (2R)-3-phospho-glyceroyl phosphate + alpha-D-mannose 1-phosphate = alpha-D-mannose 1,6-bisphosphate + (2R)-3-phosphoglycerate + H(+). Its function is as follows. Glucose 1,6-bisphosphate synthase using 1,3-bisphosphoglycerate as a phosphate donor and a series of 1-phosphate sugars, including glucose 1-phosphate, mannose 1-phosphate, ribose 1-phosphate and deoxyribose 1-phosphate, as acceptors. In vitro, also exhibits very low phosphopentomutase and phosphoglucomutase activity which are most probably not physiologically relevant. The chain is Glucose 1,6-bisphosphate synthase from Mus musculus (Mouse).